Here is a 171-residue protein sequence, read N- to C-terminus: RNA pyrophosphohydrolase (171 aa).

Residues 6–149 (GFRPNVGIIL…KREVYRRALK (144 aa)) enclose the Nudix hydrolase domain. A Nudix box motif is present at residues 39–60 (GGIKESESAEQALYRELQEEVG).

Belongs to the Nudix hydrolase family. RppH subfamily. The cofactor is a divalent metal cation.

Its function is as follows. Accelerates the degradation of transcripts by removing pyrophosphate from the 5'-end of triphosphorylated RNA, leading to a more labile monophosphorylated state that can stimulate subsequent ribonuclease cleavage. The protein is RNA pyrophosphohydrolase of Teredinibacter turnerae (strain ATCC 39867 / T7901).